We begin with the raw amino-acid sequence, 364 residues long: GTPase Obg (364 aa).

An Obg domain is found at 1 to 159 (MKFLDEAKVY…KTIWLHLKLI (159 aa)). One can recognise an OBG-type G domain in the interval 160–327 (ADAGLVGLPN…VLRALRDIIV (168 aa)). Residues 166-173 (GLPNAGKS), 191-195 (FTTLH), 212-215 (DIPG), 279-282 (SQID), and 308-310 (SAV) contribute to the GTP site. Residues S173 and T193 each contribute to the Mg(2+) site. The disordered stretch occupies residues 333 to 364 (EKPAKVPKLRHRDMVVTDEGEDKGGDEGDDQP).

This sequence belongs to the TRAFAC class OBG-HflX-like GTPase superfamily. OBG GTPase family. In terms of assembly, monomer. Mg(2+) serves as cofactor.

The protein resides in the cytoplasm. An essential GTPase which binds GTP, GDP and possibly (p)ppGpp with moderate affinity, with high nucleotide exchange rates and a fairly low GTP hydrolysis rate. Plays a role in control of the cell cycle, stress response, ribosome biogenesis and in those bacteria that undergo differentiation, in morphogenesis control. The polypeptide is GTPase Obg (Rhizobium johnstonii (strain DSM 114642 / LMG 32736 / 3841) (Rhizobium leguminosarum bv. viciae)).